The following is an 833-amino-acid chain: Coiled-coil domain-containing protein 110 (833 aa).

Positions 431 to 778 form a coiled coil; the sequence is LQNYLKESVQ…REYLNLSDKI (348 aa).

Its subcellular location is the nucleus. The chain is Coiled-coil domain-containing protein 110 (CCDC110) from Macaca fascicularis (Crab-eating macaque).